A 540-amino-acid polypeptide reads, in one-letter code: Chaperonin GroEL 4 (540 aa).

Residues 29 to 32 (TLGP), 86 to 90 (DGTTT), glycine 413, 477 to 479 (NAA), and aspartate 493 each bind ATP.

The protein belongs to the chaperonin (HSP60) family. As to quaternary structure, forms a cylinder of 14 subunits composed of two heptameric rings stacked back-to-back. Interacts with the co-chaperonin GroES.

Its subcellular location is the cytoplasm. The enzyme catalyses ATP + H2O + a folded polypeptide = ADP + phosphate + an unfolded polypeptide.. In terms of biological role, together with its co-chaperonin GroES, plays an essential role in assisting protein folding. The GroEL-GroES system forms a nano-cage that allows encapsulation of the non-native substrate proteins and provides a physical environment optimized to promote and accelerate protein folding. This is Chaperonin GroEL 4 from Frankia casuarinae (strain DSM 45818 / CECT 9043 / HFP020203 / CcI3).